The chain runs to 483 residues: Nucleolar protein 4 (483 aa).

2 disordered regions span residues 210–418 (QQDE…PIPS) and 435–483 (SESR…DPQI). Residues 211–225 (QDEDESSIESDEFDM) show a composition bias toward acidic residues. Polar residues-rich tracts occupy residues 229-254 (TRMS…TVHG), 262-271 (AESSNGNETL), and 302-317 (QPLN…QLTS). Basic and acidic residues-rich tracts occupy residues 319–330 (FRIDDQGSDGKN) and 340–350 (LKMEREARENG). Over residues 351–363 (SKSPAHSYSSYDS) the composition is skewed to polar residues. 3 stretches are compositionally biased toward basic and acidic residues: residues 364 to 374 (GKNESVDRGAE), 391 to 409 (HEDS…ERLK), and 435 to 451 (SESR…KAQD). The segment covering 467–483 (ATYSTATVPGSQEDPQI) has biased composition (polar residues).

It is found in the nucleus. The protein localises to the nucleolus. This Mus musculus (Mouse) protein is Nucleolar protein 4 (Nol4).